A 381-amino-acid polypeptide reads, in one-letter code: E3 ubiquitin-protein ligase KCMF1 (381 aa).

At S2 the chain carries N-acetylserine. Residue S2 is modified to Phosphoserine. The segment at 4–60 adopts a ZZ-type zinc-finger fold; sequence HEGVSCDACLKGNFRGRRYKCLICYDYDLCASCYESGATTTRHTTDHPMQCILTRVD. Positions 9, 12, 24, 27, 33, 36, 46, and 50 each coordinate Zn(2+). The C2H2-type zinc finger occupies 78–101; it reads FTCPYCGKMGYTETSLQEHVTSEH. The tract at residues 154–194 is disordered; sequence MFHPGRGLGGPRARRSNMHFTSSSTGGLSSSQSSYSPSSRE. Phosphoserine occurs at positions 169, 189, and 212. The span at 175-192 shows a compositional bias: low complexity; it reads SSSTGGLSSSQSSYSPSS. A coiled-coil region spans residues 224–259; the sequence is ASQLQQLQMQLQLERQHAQAARQQLETARNASRRTN. A phosphoserine mark is found at S335 and S336.

This sequence belongs to the KCMF1 family. As to quaternary structure, component of the SIFI complex, composed of KCMF1, UBR4 and calmodulin (CALM1, CALM2 or CALM3). As to expression, testis, liver, kidney, heart and skeletal muscle.

It localises to the cytoplasm. The protein localises to the late endosome. Its subcellular location is the lysosome. It catalyses the reaction S-ubiquitinyl-[E2 ubiquitin-conjugating enzyme]-L-cysteine + [acceptor protein]-L-lysine = [E2 ubiquitin-conjugating enzyme]-L-cysteine + N(6)-ubiquitinyl-[acceptor protein]-L-lysine.. It functions in the pathway protein modification; protein ubiquitination. E3 ubiquitin-protein ligase which accepts ubiquitin from an E2 ubiquitin-conjugating enzyme and then transfers it to targeted substrates, promoting their degradation by the proteasome. Together with UBR4, component of the N-end rule pathway: ubiquitinates proteins bearing specific N-terminal residues that are destabilizing according to the N-end rule, leading to their degradation. Does not ubiquitinate proteins that are acetylated at the N-terminus. Together with UBR4, part of a protein quality control pathway that catalyzes ubiquitination and degradation of proteins that have been oxidized in response to reactive oxygen species (ROS): recognizes proteins with an Arg-CysO3(H) degron at the N-terminus, and mediates assembly of heterotypic 'Lys-63'-/'Lys-27'-linked branched ubiquitin chains on oxidized proteins, leading to their degradation by autophagy. Catalytic component of the SIFI complex, a multiprotein complex required to inhibit the mitochondrial stress response after a specific stress event has been resolved: ubiquitinates and degrades (1) components of the HRI-mediated signaling of the integrated stress response, such as DELE1 and EIF2AK1/HRI, as well as (2) unimported mitochondrial precursors. Within the SIFI complex, UBR4 initiates ubiquitin chain that are further elongated or branched by KCMF1. The polypeptide is E3 ubiquitin-protein ligase KCMF1 (Mus musculus (Mouse)).